Reading from the N-terminus, the 84-residue chain is Sec-independent protein translocase protein TatA (84 aa).

A helical membrane pass occupies residues 4–24; it reads MSPVHWLILAVVLLVVFGGGG. Positions 46–84 are disordered; that stretch reads DDESMTATDATQAPGHISPPNQNPGYSQTTSSETHRNQV. Residues 64-77 are compositionally biased toward polar residues; that stretch reads PPNQNPGYSQTTSS.

It belongs to the TatA/E family. The Tat system comprises two distinct complexes: a TatABC complex, containing multiple copies of TatA, TatB and TatC subunits, and a separate TatA complex, containing only TatA subunits. Substrates initially bind to the TatABC complex, which probably triggers association of the separate TatA complex to form the active translocon.

The protein localises to the cell inner membrane. Part of the twin-arginine translocation (Tat) system that transports large folded proteins containing a characteristic twin-arginine motif in their signal peptide across membranes. TatA could form the protein-conducting channel of the Tat system. This chain is Sec-independent protein translocase protein TatA, found in Gluconobacter oxydans (strain 621H) (Gluconobacter suboxydans).